Here is a 23-residue protein sequence, read N- to C-terminus: Phallacidin proprotein (23 aa).

Pro-1 is a propeptide. Positions 2–8 (AWLVDCP) form a cross-link, cyclopeptide (Ala-Pro). The segment at residues 3-7 (WLVDC) is a cross-link (2'-cysteinyl-6'-hydroxytryptophan sulfoxide (Trp-Cys)). A propeptide spanning residues 9–23 (CVGDDVNRLLARGEK) is cleaved from the precursor.

It belongs to the MSDIN fungal toxin family. In terms of processing, processed by the macrocyclase-peptidase enzyme POPB to yield a toxic cyclic heptapeptide. POPB first removes 10 residues from the N-terminus. Conformational trapping of the remaining peptide forces the enzyme to release this intermediate rather than proceed to macrocyclization. The enzyme rebinds the remaining peptide in a different conformation and catalyzes macrocyclization of the N-terminal 7 residues.

Its function is as follows. Major toxin that belongs to the bicyclic heptapeptides called phallotoxins. Although structurally related to amatoxins, phallotoxins have a different mode of action, which is the stabilization of F-actin. Phallotoxins are poisonous when administered parenterally, but not orally because of poor absorption. This Amanita fuliginea (East Asian brown death cap) protein is Phallacidin proprotein.